A 139-amino-acid chain; its full sequence is ATP synthase epsilon chain (139 aa).

This sequence belongs to the ATPase epsilon chain family. As to quaternary structure, F-type ATPases have 2 components, CF(1) - the catalytic core - and CF(0) - the membrane proton channel. CF(1) has five subunits: alpha(3), beta(3), gamma(1), delta(1), epsilon(1). CF(0) has three main subunits: a, b and c.

The protein resides in the cell membrane. In terms of biological role, produces ATP from ADP in the presence of a proton gradient across the membrane. The protein is ATP synthase epsilon chain of Enterococcus faecalis (strain ATCC 700802 / V583).